Consider the following 136-residue polypeptide: Secreted RxLR effector protein 63 (136 aa).

An N-terminal signal peptide occupies residues 1–21; that stretch reads MQRFPYSLLLLLLSATNRSRR. The RxLR motif lies at 43–46; sequence RMLR.

The protein belongs to the RxLR effector family.

Its subcellular location is the secreted. It is found in the host nucleus. In terms of biological role, effector that partially suppresses the tobacco programmed cell death induced by cell death-inducing proteins. This chain is Secreted RxLR effector protein 63, found in Plasmopara viticola (Downy mildew of grapevine).